We begin with the raw amino-acid sequence, 551 residues long: (6-4)DNA photolyase (551 aa).

One can recognise a Photolyase/cryptochrome alpha/beta domain in the interval 13–157; sequence AAAMVWFRKG…DVFSPVSHTL (145 aa). A phosphate-binding site is contributed by E254. Residues K255, 268 to 272, 309 to 313, 372 to 375, R378, 407 to 409, and N413 contribute to the FAD site; these read TTVLS, QLLWR, WMHH, and DSD. Position 312 (W312) interacts with DNA. Residues 374-379 form an interaction with DNA region; it reads HHLARH. Position 419 (W419) interacts with DNA. Residues 508–551 are disordered; it reads YASNRLDDDKPDKGKSSNSSRRKLSAGSQVTPNSSKTKQLKRSS. The span at 512 to 522 shows a compositional bias: basic and acidic residues; sequence RLDDDKPDKGK. Residues 533–544 show a composition bias toward polar residues; sequence AGSQVTPNSSKT.

This sequence belongs to the DNA photolyase class-1 family. FAD serves as cofactor.

The catalysed reaction is (6-4) photoproduct (in DNA) = 2 pyrimidine residues (in DNA).. Functionally, involved in repair of UV radiation-induced DNA damage. Catalyzes the photoreactivation of pyrimidine [6-4] pyrimidone photoproduct (6-4 products). This Oryza sativa subsp. japonica (Rice) protein is (6-4)DNA photolyase (UVR3).